The sequence spans 104 residues: Large ribosomal subunit protein uL24 (104 aa).

This sequence belongs to the universal ribosomal protein uL24 family. In terms of assembly, part of the 50S ribosomal subunit.

In terms of biological role, one of two assembly initiator proteins, it binds directly to the 5'-end of the 23S rRNA, where it nucleates assembly of the 50S subunit. One of the proteins that surrounds the polypeptide exit tunnel on the outside of the subunit. This chain is Large ribosomal subunit protein uL24, found in Maricaulis maris (strain MCS10) (Caulobacter maris).